A 141-amino-acid chain; its full sequence is VLSSADKANIKATWDKIGGHGGEYGAEALERTFLCFPTTKTYFPHFDLSHGSAQVKAHGKKVADALAVAAAHLDDLPAALSALSDLHAYKLRVDPVNFKLLSHCLLVTLAAHHPAEFTPAVHASLDKFLSSVSTVLTSKYR.

In terms of domain architecture, Globin spans 1–141 (VLSSADKANI…VSTVLTSKYR (141 aa)). The residue at position 3 (S3) is a Phosphoserine. K7 and K11 each carry N6-succinyllysine. K16 is modified (N6-acetyllysine; alternate). K16 carries the N6-succinyllysine; alternate modification. At Y24 the chain carries Phosphotyrosine. An N6-succinyllysine modification is found at K40. S49 carries the post-translational modification Phosphoserine. H58 contacts O2. H87 is a heme b binding site. S102 carries the phosphoserine modification. The residue at position 108 (T108) is a Phosphothreonine. A phosphoserine mark is found at S124 and S131. Residues T134 and T137 each carry the phosphothreonine modification. S138 carries the post-translational modification Phosphoserine.

The protein belongs to the globin family. As to quaternary structure, heterotetramer of two alpha chains and two beta chains. As to expression, red blood cells.

In terms of biological role, involved in oxygen transport from the lung to the various peripheral tissues. Hemopressin acts as an antagonist peptide of the cannabinoid receptor CNR1. Hemopressin-binding efficiently blocks cannabinoid receptor CNR1 and subsequent signaling. This chain is Hemoglobin subunit alpha (HBA), found in Proteles cristata (Aardwolf).